We begin with the raw amino-acid sequence, 304 residues long: Coenzyme PQQ synthesis protein B (304 aa).

The protein belongs to the PqqB family.

Its pathway is cofactor biosynthesis; pyrroloquinoline quinone biosynthesis. Functionally, may be involved in the transport of PQQ or its precursor to the periplasm. The protein is Coenzyme PQQ synthesis protein B of Pseudomonas aeruginosa (strain UCBPP-PA14).